Consider the following 352-residue polypeptide: Neutral protease 2 homolog ATEG_04941 (352 aa).

A signal peptide spans 1-19 (MRFTALATAILPLACNVLA). Positions 20 to 175 (LPAKTGEAPK…ASAVKPLDKR (156 aa)) are excised as a propeptide. 2 disulfide bridges follow: C181–C253 and C260–C278. H303 is a binding site for Zn(2+). Residue E304 is part of the active site. Zn(2+)-binding residues include H307 and D318.

This sequence belongs to the peptidase M35 family. The cofactor is Zn(2+).

It localises to the secreted. The enzyme catalyses Preferential cleavage of bonds with hydrophobic residues in P1'. Also 3-Asn-|-Gln-4 and 8-Gly-|-Ser-9 bonds in insulin B chain.. Functionally, secreted metalloproteinase that allows assimilation of proteinaceous substrates. Shows high activities on basic nuclear substrates such as histone and protamine. In Aspergillus terreus (strain NIH 2624 / FGSC A1156), this protein is Neutral protease 2 homolog ATEG_04941.